The primary structure comprises 87 residues: Long neurotoxin LlLong (87 aa).

The first 20 residues, 1–20 (KTLLLTLVVVTIICLDFGYT), serve as a signal peptide directing secretion. Intrachain disulfides connect Cys23–Cys41, Cys34–Cys62, Cys47–Cys51, Cys66–Cys77, and Cys78–Cys83.

This sequence belongs to the three-finger toxin family. Long-chain subfamily. Type II alpha-neurotoxin sub-subfamily. Expressed by the venom gland.

The protein localises to the secreted. Its function is as follows. Binds with high affinity to muscular (alpha-1/CHRNA1) and neuronal (alpha-7/CHRNA7) nicotinic acetylcholine receptor (nAChR) and inhibits acetylcholine from binding to the receptor, thereby impairing neuromuscular and neuronal transmission. In Laticauda laticaudata (Blue-ringed sea krait), this protein is Long neurotoxin LlLong.